Consider the following 337-residue polypeptide: MEESRVRQLPKIELHCHLDGSIRPTTLRTIAEKQNIPLPQDEQALKELVVAPEKCTDLNDYLTRFDFVLTCLQTAEALQAAAYDVISQAAEDGVAYIEVRFAPSQHTEKGLRLPEIVTAVLTGLKQGEEDFGVKSNALLCGMRHDQQQAIEKIVHLAHDFRETGVVGFDLAGNEVDFPPYTFEDVLALANQLSIPLTLHAGECGCGKNVADAVTLGATRIGHGIALKDTPEYLALLKEKKVLLEMCPTSNFQTGTVKTLAEYPFQQFIEAGLAVCINTDNRTVSDTTLTKEFMKLATWYQLSYDEMKQLTKNALAGAFLSPDEKKLLNQKIDQAYLF.

2 residues coordinate Zn(2+): H15 and H17. Positions 17, 19, and 172 each coordinate substrate. A Zn(2+)-binding site is contributed by H199. Catalysis depends on E202, which acts as the Proton donor. Position 279 (D279) interacts with Zn(2+).

Belongs to the metallo-dependent hydrolases superfamily. Adenosine and AMP deaminases family. Adenosine deaminase subfamily. Requires Zn(2+) as cofactor.

The catalysed reaction is adenosine + H2O + H(+) = inosine + NH4(+). It carries out the reaction 2'-deoxyadenosine + H2O + H(+) = 2'-deoxyinosine + NH4(+). Its function is as follows. Catalyzes the hydrolytic deamination of adenosine and 2-deoxyadenosine. The chain is Adenosine deaminase from Enterococcus faecalis (strain ATCC 700802 / V583).